The chain runs to 136 residues: Large-conductance mechanosensitive channel (136 aa).

2 helical membrane-spanning segments follow: residues 10–30 (FAMR…AAFG) and 76–96 (GVFI…FMAI).

It belongs to the MscL family. As to quaternary structure, homopentamer.

Its subcellular location is the cell inner membrane. Its function is as follows. Channel that opens in response to stretch forces in the membrane lipid bilayer. May participate in the regulation of osmotic pressure changes within the cell. This chain is Large-conductance mechanosensitive channel, found in Escherichia coli O139:H28 (strain E24377A / ETEC).